Here is a 235-residue protein sequence, read N- to C-terminus: Glucosamine-6-phosphate deaminase (235 aa).

The active-site Proton acceptor; for enolization step is Asp-62. The active-site For ring-opening step is the Asn-128. The active-site Proton acceptor; for ring-opening step is His-130. The active-site For ring-opening step is the Glu-135.

It belongs to the glucosamine/galactosamine-6-phosphate isomerase family. NagB subfamily.

It carries out the reaction alpha-D-glucosamine 6-phosphate + H2O = beta-D-fructose 6-phosphate + NH4(+). The protein operates within amino-sugar metabolism; N-acetylneuraminate degradation; D-fructose 6-phosphate from N-acetylneuraminate: step 5/5. Functionally, catalyzes the reversible isomerization-deamination of glucosamine 6-phosphate (GlcN6P) to form fructose 6-phosphate (Fru6P) and ammonium ion. This chain is Glucosamine-6-phosphate deaminase, found in Streptococcus gordonii (strain Challis / ATCC 35105 / BCRC 15272 / CH1 / DL1 / V288).